Consider the following 254-residue polypeptide: Imidazole glycerol phosphate synthase subunit HisF (254 aa).

Residues Asp12 and Asp131 contribute to the active site.

The protein belongs to the HisA/HisF family. Heterodimer of HisH and HisF.

The protein resides in the cytoplasm. It catalyses the reaction 5-[(5-phospho-1-deoxy-D-ribulos-1-ylimino)methylamino]-1-(5-phospho-beta-D-ribosyl)imidazole-4-carboxamide + L-glutamine = D-erythro-1-(imidazol-4-yl)glycerol 3-phosphate + 5-amino-1-(5-phospho-beta-D-ribosyl)imidazole-4-carboxamide + L-glutamate + H(+). The protein operates within amino-acid biosynthesis; L-histidine biosynthesis; L-histidine from 5-phospho-alpha-D-ribose 1-diphosphate: step 5/9. IGPS catalyzes the conversion of PRFAR and glutamine to IGP, AICAR and glutamate. The HisF subunit catalyzes the cyclization activity that produces IGP and AICAR from PRFAR using the ammonia provided by the HisH subunit. The protein is Imidazole glycerol phosphate synthase subunit HisF of Desulfitobacterium hafniense (strain Y51).